A 307-amino-acid polypeptide reads, in one-letter code: Ornithine carbamoyltransferase (307 aa).

Carbamoyl phosphate is bound by residues 56-59 (STRT), Gln83, Arg107, and 134-137 (HPCQ). L-ornithine is bound by residues Asn165, Asp223, and 227–228 (SM). Residues 263–264 (CL) and Arg291 contribute to the carbamoyl phosphate site.

It belongs to the aspartate/ornithine carbamoyltransferase superfamily. OTCase family.

Its subcellular location is the cytoplasm. It carries out the reaction carbamoyl phosphate + L-ornithine = L-citrulline + phosphate + H(+). The protein operates within amino-acid degradation; L-arginine degradation via ADI pathway; carbamoyl phosphate from L-arginine: step 2/2. In terms of biological role, reversibly catalyzes the transfer of the carbamoyl group from carbamoyl phosphate (CP) to the N(epsilon) atom of ornithine (ORN) to produce L-citrulline. This Cupriavidus taiwanensis (strain DSM 17343 / BCRC 17206 / CCUG 44338 / CIP 107171 / LMG 19424 / R1) (Ralstonia taiwanensis (strain LMG 19424)) protein is Ornithine carbamoyltransferase.